The chain runs to 404 residues: G-protein coupled receptor 143 (404 aa).

The Extracellular portion of the chain corresponds to 1–28; it reads MASPRLGTFCCPTRDAATQLVLSFQPRA. Residues 29–49 traverse the membrane as a helical segment; sequence FHALCLGSGGLRLALGLLQLL. Residues 50 to 78 lie on the Cytoplasmic side of the membrane; sequence PGRRPAGPGSPATSPPASVRILRAAAACD. The helical transmembrane segment at 79-99 threads the bilayer; the sequence is LLGCLGMVIRSTVWLGFPNFV. Residues 100-124 lie on the Extracellular side of the membrane; it reads DSVSDMNHTEIWPAAFCVGSAMWIQ. Residue N106 is glycosylated (N-linked (GlcNAc...) asparagine). Residues 125 to 145 traverse the membrane as a helical segment; it reads LLYSACFWWLFCYAVDAYLVI. Residues 146–149 lie on the Cytoplasmic side of the membrane; the sequence is RRSA. A helical transmembrane segment spans residues 150 to 170; sequence GLSTILLYHIMAWGLATLLCV. The Extracellular portion of the chain corresponds to 171 to 191; it reads EGAAMLYYPSVSRCERGLDHA. Residues 192–212 traverse the membrane as a helical segment; sequence IPHYVTMYLPLLLVLVANPIL. Residues 213 to 248 are Cytoplasmic-facing; it reads FQKTVTAVASLLKGRQGIYTENERRMGAVIKIRFFK. The segment at 221–238 is necessary for its G protein-activation ability and normal distribution of melanosomes; the sequence is ASLLKGRQGIYTENERRM. A lysosomal/melanosomal membrane localization signal motif is present at residues 222–231; that stretch reads SLLKGRQGIY. Residues 249-269 form a helical membrane-spanning segment; it reads IMLVLIICWLSNIINESLLFY. Topologically, residues 270-292 are extracellular; it reads LEMQTDINGGSLKPVRTAAKTTW. Residues 293-313 form a helical membrane-spanning segment; it reads FIMGILNPAQGFLLSLAFYGW. Topologically, residues 314 to 404 are cytoplasmic; it reads TGCSLGFQSP…DPALPTHGDL (91 aa). Positions 329–330 match the lysosomal/melanosomal membrane localization signal motif; that stretch reads WE. Positions 338-404 are disordered; it reads EGAHPSPLMP…DPALPTHGDL (67 aa). Residues 355–366 show a composition bias toward polar residues; it reads KVSQVGGQTSDE.

This sequence belongs to the G-protein coupled receptor OA family. In terms of assembly, interacts with heterotrimeric G(i) proteins. Interacts with ARRB1 and ARRB2. Interacts with MLANA. Post-translationally, glycosylated. Phosphorylated. Expressed at high levels in the retina, including the retinal pigment epithelium (RPE), and in melanocytes. Weak expression is observed in brain and adrenal gland.

The protein resides in the melanosome membrane. It is found in the lysosome membrane. The protein localises to the apical cell membrane. Functionally, receptor for tyrosine, L-DOPA and dopamine. After binding to L-DOPA, stimulates Ca(2+) influx into the cytoplasm, increases secretion of the neurotrophic factor SERPINF1 and relocalizes beta arrestin at the plasma membrane; this ligand-dependent signaling occurs through a G(q)-mediated pathway in melanocytic cells. Its activity is mediated by G proteins which activate the phosphoinositide signaling pathway. Also plays a role as an intracellular G protein-coupled receptor involved in melanosome biogenesis, organization and transport. The polypeptide is G-protein coupled receptor 143 (GPR143) (Homo sapiens (Human)).